Reading from the N-terminus, the 1262-residue chain is Tau-tubulin kinase homolog Asator (1262 aa).

The segment at 13-35 (NASAPDDGNQSCQPSSKQDQYLS) is disordered. Residues 20–35 (GNQSCQPSSKQDQYLS) are compositionally biased toward polar residues. The Protein kinase domain maps to 173–436 (WKVVRKIGGG…MLIGLFERCM (264 aa)). Residues 179–187 (IGGGGFGEI) and Lys-202 contribute to the ATP site. The Proton acceptor role is filled by Asp-293. 3 disordered regions span residues 662–724 (TVTN…TSNA), 755–792 (RSAT…ARSS), and 984–1003 (KDSA…SRHR). Residues 667 to 679 (KTSEVNRSTEEQK) show a composition bias toward basic and acidic residues. The span at 755 to 776 (RSATSTNLRPSSSASQRINSGS) shows a compositional bias: polar residues.

It belongs to the protein kinase superfamily. CK1 Ser/Thr protein kinase family. In terms of assembly, interacts with Mgtor. The cofactor is Mg(2+). Detected in larval brain.

It localises to the cytoplasm. The protein localises to the cytoskeleton. The protein resides in the spindle. It catalyses the reaction L-seryl-[protein] + ATP = O-phospho-L-seryl-[protein] + ADP + H(+). The catalysed reaction is L-threonyl-[protein] + ATP = O-phospho-L-threonyl-[protein] + ADP + H(+). Probable serine/threonine protein kinase. This is Tau-tubulin kinase homolog Asator from Drosophila melanogaster (Fruit fly).